The primary structure comprises 82 residues: Phosphoribosylformylglycinamidine synthase subunit PurS (82 aa).

Belongs to the PurS family. In terms of assembly, homodimer. Part of the FGAM synthase complex composed of 1 PurL, 1 PurQ and 2 PurS subunits.

It is found in the cytoplasm. The enzyme catalyses N(2)-formyl-N(1)-(5-phospho-beta-D-ribosyl)glycinamide + L-glutamine + ATP + H2O = 2-formamido-N(1)-(5-O-phospho-beta-D-ribosyl)acetamidine + L-glutamate + ADP + phosphate + H(+). Its pathway is purine metabolism; IMP biosynthesis via de novo pathway; 5-amino-1-(5-phospho-D-ribosyl)imidazole from N(2)-formyl-N(1)-(5-phospho-D-ribosyl)glycinamide: step 1/2. Functionally, part of the phosphoribosylformylglycinamidine synthase complex involved in the purines biosynthetic pathway. Catalyzes the ATP-dependent conversion of formylglycinamide ribonucleotide (FGAR) and glutamine to yield formylglycinamidine ribonucleotide (FGAM) and glutamate. The FGAM synthase complex is composed of three subunits. PurQ produces an ammonia molecule by converting glutamine to glutamate. PurL transfers the ammonia molecule to FGAR to form FGAM in an ATP-dependent manner. PurS interacts with PurQ and PurL and is thought to assist in the transfer of the ammonia molecule from PurQ to PurL. The polypeptide is Phosphoribosylformylglycinamidine synthase subunit PurS (Thermotoga maritima (strain ATCC 43589 / DSM 3109 / JCM 10099 / NBRC 100826 / MSB8)).